A 725-amino-acid chain; its full sequence is Eukaryotic elongation factor 2 kinase (725 aa).

Residues 1 to 12 (MADEDLIFRLEG) show a composition bias toward basic and acidic residues. A disordered region spans residues 1–38 (MADEDLIFRLEGVDGGQSPRAGHDGDSDGDSDDEEGYF). The residue at position 2 (Ala2) is an N-acetylalanine. A phosphoserine mark is found at Ser18 and Ser27. Residues 27 to 36 (SDGDSDDEEG) show a composition bias toward acidic residues. Ser61 and Ser66 each carry phosphoserine; by autocatalysis. Phosphoserine occurs at positions 70, 71, 72, and 74. Ser78 carries the post-translational modification Phosphoserine; by autocatalysis and TRPM7. The interval 81–94 (FKEAWKHAIQKAKH) is calmodulin-binding. Residues 116-326 (RYNAVTGEWL…ICESMGLAPF (211 aa)) form the Alpha-type protein kinase domain. Position 243 is a phosphoserine (Ser243). ATP is bound at residue 296 to 302 (GDGNLGV). 2 positions are modified to phosphothreonine; by autocatalysis: Thr348 and Thr353. 2 disordered regions span residues 352–405 (GTEE…PHSQ) and 423–477 (SRDH…SLGS). Position 359 is a phosphoserine; by MAPK13 and CDK1 (Ser359). Residues 363–377 (RTLSGSRPPLLRPLS) show a composition bias toward low complexity. The residue at position 366 (Ser366) is a Phosphoserine; by autocatalysis, RPS6KA1 and RPS6KB1. Residues 386–404 (SDVTFDSLPSSPSSATPHS) are compositionally biased toward polar residues. At Ser392 the chain carries Phosphoserine. The residue at position 398 (Ser398) is a Phosphoserine; by AMPK. Basic and acidic residues-rich tracts occupy residues 423–436 (SRDH…RESE) and 445–469 (SEKR…RKYE). Ser435 carries the post-translational modification Phosphoserine. Ser445 is subject to Phosphoserine; by autocatalysis. Phosphoserine is present on Ser470. At Ser474 the chain carries Phosphoserine; by autocatalysis. Position 477 is a phosphoserine (Ser477). Ser491 is subject to Phosphoserine; by autocatalysis. Position 500 is a phosphoserine; by PKA (Ser500).

Belongs to the protein kinase superfamily. Alpha-type protein kinase family. Monomer or homodimer. Interacts with Calmodulin/CALM1; this interaction is strictly required for phosphorylation activity. Autophosphorylated at multiple residues, Thr-348 being the major site. Phosphorylated by AMP-activated protein kinase AMPK at Ser-398 leading to EEF2K activation and protein synthesis inhibition. Phosphorylated by TRPM7 at Ser-78 resulting in improved protein stability, higher EE2F phosphorylated and subsequently reduced rate of protein synthesis. Phosphorylation by other kinases such as CDK1 and MAPK13 at Ser-359 or RPS6KA1 and RPS6KB1 at Ser-366 instead decrease EEF2K activity and promote protein synthesis.

It catalyses the reaction [translation elongation factor 2] + ATP = [translation elongation factor 2]-phosphate + ADP + H(+). With respect to regulation, undergoes calcium/calmodulin-dependent intramolecular autophosphorylation, and this results in it becoming partially calcium/calmodulin-independent. In terms of biological role, threonine kinase that regulates protein synthesis by controlling the rate of peptide chain elongation. Upon activation by a variety of upstream kinases including AMPK or TRPM7, phosphorylates the elongation factor EEF2 at a single site, renders it unable to bind ribosomes and thus inactive. In turn, the rate of protein synthesis is reduced. This Homo sapiens (Human) protein is Eukaryotic elongation factor 2 kinase (EEF2K).